Consider the following 345-residue polypeptide: N-acetyl-gamma-glutamyl-phosphate reductase (345 aa).

Cys149 is an active-site residue.

Belongs to the NAGSA dehydrogenase family. Type 1 subfamily.

The protein resides in the cytoplasm. The enzyme catalyses N-acetyl-L-glutamate 5-semialdehyde + phosphate + NADP(+) = N-acetyl-L-glutamyl 5-phosphate + NADPH + H(+). It functions in the pathway amino-acid biosynthesis; L-arginine biosynthesis; N(2)-acetyl-L-ornithine from L-glutamate: step 3/4. Catalyzes the NADPH-dependent reduction of N-acetyl-5-glutamyl phosphate to yield N-acetyl-L-glutamate 5-semialdehyde. This is N-acetyl-gamma-glutamyl-phosphate reductase from Bacillus anthracis.